The chain runs to 366 residues: Alanine racemase (366 aa).

The active-site Proton acceptor; specific for D-alanine is the Lys40. Residue Lys40 is modified to N6-(pyridoxal phosphate)lysine. Position 136 (Arg136) interacts with substrate. The active-site Proton acceptor; specific for L-alanine is the Tyr263. Substrate is bound at residue Met310.

The protein belongs to the alanine racemase family. The cofactor is pyridoxal 5'-phosphate.

It catalyses the reaction L-alanine = D-alanine. It participates in amino-acid biosynthesis; D-alanine biosynthesis; D-alanine from L-alanine: step 1/1. Its function is as follows. Catalyzes the interconversion of L-alanine and D-alanine. May also act on other amino acids. The chain is Alanine racemase (alr) from Streptococcus pyogenes serotype M1.